The chain runs to 263 residues: Indolethylamine N-methyltransferase (263 aa).

At lysine 13 the chain carries N6-succinyllysine. Residues tyrosine 20, tyrosine 25, 63–64, tyrosine 69, aspartate 85, and asparagine 90 each bind S-adenosyl-L-methionine; that span reads GS. Lysine 96 is modified (N6-succinyllysine). Residues 142 to 143 and leucine 163 each bind S-adenosyl-L-methionine; that span reads DV.

This sequence belongs to the class I-like SAM-binding methyltransferase superfamily. NNMT/PNMT/TEMT family. As to quaternary structure, monomer.

The protein resides in the cytoplasm. The enzyme catalyses a tertiary amine + S-adenosyl-L-methionine = a methylated tertiary amine + S-adenosyl-L-homocysteine + H(+). The catalysed reaction is a secondary amine + S-adenosyl-L-methionine = a methylated secondary amine + S-adenosyl-L-homocysteine + H(+). It carries out the reaction a primary amine + S-adenosyl-L-methionine = a methylated primary amine + S-adenosyl-L-homocysteine + H(+). It catalyses the reaction dimethyl sulfide + S-adenosyl-L-methionine = trimethylsulfonium + S-adenosyl-L-homocysteine. Catalyzes the N-methylation of tryptamine and structurally related compounds. Functions as a thioether S-methyltransferase and is active with a variety of thioethers and the corresponding selenium and tellurium compounds, including 3-methylthiopropionaldehyde, dimethyl selenide, dimethyl telluride, 2-methylthioethylamine, 2-methylthioethanol, methyl-n-propyl sulfide and diethyl sulfide. Plays an important role in the detoxification of selenium compounds. This Pongo abelii (Sumatran orangutan) protein is Indolethylamine N-methyltransferase (INMT).